We begin with the raw amino-acid sequence, 272 residues long: Shikimate dehydrogenase (NADP(+)) (272 aa).

Shikimate is bound by residues 14 to 16 (SKS) and T61. K65 serves as the catalytic Proton acceptor. E77 provides a ligand contact to NADP(+). Shikimate-binding residues include N86 and D102. Residues 126 to 130 (GAGGA), 149 to 154 (NRTASR), and M213 each bind NADP(+). Y215 is a shikimate binding site. G237 is an NADP(+) binding site.

Belongs to the shikimate dehydrogenase family. Homodimer.

The enzyme catalyses shikimate + NADP(+) = 3-dehydroshikimate + NADPH + H(+). It participates in metabolic intermediate biosynthesis; chorismate biosynthesis; chorismate from D-erythrose 4-phosphate and phosphoenolpyruvate: step 4/7. Its function is as follows. Involved in the biosynthesis of the chorismate, which leads to the biosynthesis of aromatic amino acids. Catalyzes the reversible NADPH linked reduction of 3-dehydroshikimate (DHSA) to yield shikimate (SA). This Salmonella typhimurium (strain LT2 / SGSC1412 / ATCC 700720) protein is Shikimate dehydrogenase (NADP(+)).